A 507-amino-acid polypeptide reads, in one-letter code: Nuclear poly(A) polymerase 3 (507 aa).

ATP-binding positions include 79–81, 91–94, aspartate 147, lysine 208, tyrosine 217, and 226–227; these read YGS, SDID, and GV. Mg(2+) is bound by residues aspartate 92, aspartate 94, and aspartate 147.

It belongs to the poly(A) polymerase family. In terms of assembly, monomer. Forms a complex with cleavage and polyadenylation specificity factor (CPSF) subunits FIPS5 and CPSF30. Requires Mg(2+) as cofactor. Mn(2+) is required as a cofactor. Expressed in leaves (mostly in petioles and tips), cotyledon, roots (tips, vascular tissue of the radicle, and throughout the root tissue excluding the elongation zone), stems, and flowers (restricted to the stigma and the pollen in mature anthers). Active in the primary and secondary root systems.

It localises to the nucleus. It carries out the reaction RNA(n) + ATP = RNA(n)-3'-adenine ribonucleotide + diphosphate. Its function is as follows. Essential protein. Polymerase that creates the 3'-poly(A) tail of mRNA's. Also required for the endoribonucleolytic cleavage reaction at some polyadenylation sites. May acquire specificity through interaction with a cleavage and polyadenylation specificity factor (CPSF) at its C-terminus. This chain is Nuclear poly(A) polymerase 3, found in Arabidopsis thaliana (Mouse-ear cress).